A 300-amino-acid chain; its full sequence is Alpha-tubulin N-acetyltransferase 1 (300 aa).

Positions 1–190 constitute an N-acetyltransferase domain; it reads MEFPFDVDAL…NNFVIFEGFF (190 aa). The residue at position 56 (lysine 56) is an N6-acetyllysine; by autocatalysis. 124 to 137 contributes to the acetyl-CoA binding site; that stretch reads FYIHESLQRHGHGR. Position 146 is an N6-acetyllysine; by autocatalysis (lysine 146). Position 160 to 169 (160 to 169) interacts with acetyl-CoA; it reads SQKLLKFLNK. Residues lysine 210 and lysine 221 each carry the N6-acetyllysine; by autocatalysis modification. 2 disordered regions span residues 229 to 263 and 280 to 300; these read PLNR…RPFV and TARL…RRTR. Phosphoserine is present on residues serine 249 and serine 253. The residue at position 282 (arginine 282) is an Asymmetric dimethylarginine. Serine 292 carries the phosphoserine modification. Arginine 300 is subject to Omega-N-methylarginine.

The protein belongs to the acetyltransferase ATAT1 family. As to quaternary structure, component of the BBSome complex. Interacts with AP2 alpha-adaptins, including AP2A2, but not with AP1 gamma-adaptin (AP1G1/AP1G2); this interaction is required for efficient alpha-tubulin acetylation, hence clathrin-coated pits are sites of microtubule acetylation. Post-translationally, autoacetylation strongly increases tubulin acetylation.

Its subcellular location is the cytoplasm. It is found in the membrane. The protein resides in the clathrin-coated pit. The protein localises to the cell junction. It localises to the focal adhesion. Its subcellular location is the cell projection. It is found in the axon. The protein resides in the cytoskeleton. The protein localises to the spindle. It catalyses the reaction L-lysyl-[alpha-tubulin] + acetyl-CoA = N(6)-acetyl-L-lysyl-[alpha-tubulin] + CoA + H(+). Functionally, specifically acetylates 'Lys-40' in alpha-tubulin on the lumenal side of microtubules. Promotes microtubule destabilization and accelerates microtubule dynamics; this activity may be independent of acetylation activity. Acetylates alpha-tubulin with a slow enzymatic rate, due to a catalytic site that is not optimized for acetyl transfer. Enters the microtubule through each end and diffuses quickly throughout the lumen of microtubules. Acetylates only long/old microtubules because of its slow acetylation rate since it does not have time to act on dynamically unstable microtubules before the enzyme is released. Required for normal sperm flagellar function. Promotes directional cell locomotion and chemotaxis, through AP2A2-dependent acetylation of alpha-tubulin at clathrin-coated pits that are concentrated at the leading edge of migrating cells. May facilitate primary cilium assembly. The polypeptide is Alpha-tubulin N-acetyltransferase 1 (Sus scrofa (Pig)).